A 430-amino-acid chain; its full sequence is Enolase (430 aa).

Residue Gln-163 coordinates (2R)-2-phosphoglycerate. Glu-205 functions as the Proton donor in the catalytic mechanism. Mg(2+) contacts are provided by Asp-242, Glu-287, and Asp-314. 4 residues coordinate (2R)-2-phosphoglycerate: Lys-339, Arg-368, Ser-369, and Lys-390. Lys-339 functions as the Proton acceptor in the catalytic mechanism.

This sequence belongs to the enolase family. It depends on Mg(2+) as a cofactor.

The protein resides in the cytoplasm. It localises to the secreted. The protein localises to the cell surface. It catalyses the reaction (2R)-2-phosphoglycerate = phosphoenolpyruvate + H2O. It functions in the pathway carbohydrate degradation; glycolysis; pyruvate from D-glyceraldehyde 3-phosphate: step 4/5. Functionally, catalyzes the reversible conversion of 2-phosphoglycerate (2-PG) into phosphoenolpyruvate (PEP). It is essential for the degradation of carbohydrates via glycolysis. The protein is Enolase of Exiguobacterium sibiricum (strain DSM 17290 / CCUG 55495 / CIP 109462 / JCM 13490 / 255-15).